The sequence spans 274 residues: Phosphate import ATP-binding protein PstB (274 aa).

The ABC transporter domain maps to 28-269 (VTVRDLNFYY…PNDRRTQDYI (242 aa)). 60-67 (GPSGCGKS) serves as a coordination point for ATP.

The protein belongs to the ABC transporter superfamily. Phosphate importer (TC 3.A.1.7) family. As to quaternary structure, the complex is composed of two ATP-binding proteins (PstB), two transmembrane proteins (PstC and PstA) and a solute-binding protein (PstS).

The protein localises to the cell inner membrane. It carries out the reaction phosphate(out) + ATP + H2O = ADP + 2 phosphate(in) + H(+). Functionally, part of the ABC transporter complex PstSACB involved in phosphate import. Responsible for energy coupling to the transport system. This chain is Phosphate import ATP-binding protein PstB, found in Rhodopseudomonas palustris (strain HaA2).